Reading from the N-terminus, the 390-residue chain is MRLRFPMKSAVLAFAIFLVFIPLFSVGIRMIPGRLTAVSATVGNGFDLGSFVEAPEYRNGKECVSQSLNRENFVSSCDASLVHVAMTLDSEYLRGSIAAVHSMLRHASCPENVFFHLIAAEFDPASPRVLSQLVRSTFPSLNFKVYIFREDTVINLISSSIRQALENPLNYARNYLGDILDPCVDRVIYLDSDIIVVDDITKLWNTSLTGSRIIGAPEYCHANFTKYFTSGFWSDPALPGFFSGRKPCYFNTGVMVMDLVRWREGNYREKLETWMQIQKKKRIYDLGSLPPFLLVFAGNVEAIDHRWNQHGLGGDNVRGSCRSLHKGPVSLLHWSGKGKPWVRLDEKRPCPLDHLWEPYDLYEHKIERAKDQSLFGFSSLSELTEDSSFF.

The Cytoplasmic portion of the chain corresponds to 1–10 (MRLRFPMKSA). Residues 11-31 (VLAFAIFLVFIPLFSVGIRMI) form a helical; Signal-anchor for type II membrane protein membrane-spanning segment. Residues 32-390 (PGRLTAVSAT…SELTEDSSFF (359 aa)) lie on the Lumenal side of the membrane. Residues Asn205 and Asn223 are each glycosylated (N-linked (GlcNAc...) asparagine).

It belongs to the glycosyltransferase 8 family.

Its subcellular location is the golgi apparatus membrane. Its pathway is glycan metabolism; pectin biosynthesis. May be involved in pectin and/or xylans biosynthesis in cell walls. The polypeptide is Probable galacturonosyltransferase-like 9 (GATL9) (Arabidopsis thaliana (Mouse-ear cress)).